Here is a 185-residue protein sequence, read N- to C-terminus: Ribosome-recycling factor (185 aa).

This sequence belongs to the RRF family.

The protein resides in the cytoplasm. Functionally, responsible for the release of ribosomes from messenger RNA at the termination of protein biosynthesis. May increase the efficiency of translation by recycling ribosomes from one round of translation to another. This Sodalis glossinidius (strain morsitans) protein is Ribosome-recycling factor.